A 458-amino-acid chain; its full sequence is Monomethylamine methyltransferase MtmB (458 aa).

A non-standard amino acid (pyrrolysine) is located at residue Pyl202.

It belongs to the monomethylamine methyltransferase family. Can form a complex with MtmC.

The catalysed reaction is Co(I)-[methylamine-specific corrinoid protein] + methylamine + H(+) = methyl-Co(III)-[methylamine-specific corrinoid protein] + NH4(+). Its pathway is one-carbon metabolism; methanogenesis from methylamine. In terms of biological role, catalyzes the transfer of the methyl group from monomethylamine to the corrinoid cofactor of MtmC. The polypeptide is Monomethylamine methyltransferase MtmB (mtmB1) (Methanosarcina mazei (strain ATCC BAA-159 / DSM 3647 / Goe1 / Go1 / JCM 11833 / OCM 88) (Methanosarcina frisia)).